Consider the following 245-residue polypeptide: Enolase-phosphatase E1 (245 aa).

Positions 14 and 16 each coordinate Mg(2+). Residues 141 to 142 (SS) and lysine 175 contribute to the substrate site. Mg(2+) is bound at residue aspartate 200.

Belongs to the HAD-like hydrolase superfamily. MasA/MtnC family. In terms of assembly, monomer. Mg(2+) serves as cofactor.

The protein localises to the cytoplasm. Its subcellular location is the nucleus. The catalysed reaction is 5-methylsulfanyl-2,3-dioxopentyl phosphate + H2O = 1,2-dihydroxy-5-(methylsulfanyl)pent-1-en-3-one + phosphate. It functions in the pathway amino-acid biosynthesis; L-methionine biosynthesis via salvage pathway; L-methionine from S-methyl-5-thio-alpha-D-ribose 1-phosphate: step 3/6. The protein operates within amino-acid biosynthesis; L-methionine biosynthesis via salvage pathway; L-methionine from S-methyl-5-thio-alpha-D-ribose 1-phosphate: step 4/6. In terms of biological role, bifunctional enzyme that catalyzes the enolization of 2,3-diketo-5-methylthiopentyl-1-phosphate (DK-MTP-1-P) into the intermediate 2-hydroxy-3-keto-5-methylthiopentenyl-1-phosphate (HK-MTPenyl-1-P), which is then dephosphorylated to form the acireductone 1,2-dihydroxy-3-keto-5-methylthiopentene (DHK-MTPene). In Drosophila grimshawi (Hawaiian fruit fly), this protein is Enolase-phosphatase E1.